We begin with the raw amino-acid sequence, 189 residues long: ATP synthase subunit delta (189 aa).

It belongs to the ATPase delta chain family. In terms of assembly, F-type ATPases have 2 components, F(1) - the catalytic core - and F(0) - the membrane proton channel. F(1) has five subunits: alpha(3), beta(3), gamma(1), delta(1), epsilon(1). F(0) has three main subunits: a(1), b(2) and c(10-14). The alpha and beta chains form an alternating ring which encloses part of the gamma chain. F(1) is attached to F(0) by a central stalk formed by the gamma and epsilon chains, while a peripheral stalk is formed by the delta and b chains.

It is found in the cell inner membrane. Its function is as follows. F(1)F(0) ATP synthase produces ATP from ADP in the presence of a proton or sodium gradient. F-type ATPases consist of two structural domains, F(1) containing the extramembraneous catalytic core and F(0) containing the membrane proton channel, linked together by a central stalk and a peripheral stalk. During catalysis, ATP synthesis in the catalytic domain of F(1) is coupled via a rotary mechanism of the central stalk subunits to proton translocation. In terms of biological role, this protein is part of the stalk that links CF(0) to CF(1). It either transmits conformational changes from CF(0) to CF(1) or is implicated in proton conduction. This is ATP synthase subunit delta from Ehrlichia ruminantium (strain Gardel).